The sequence spans 213 residues: Thiamine-phosphate synthase (213 aa).

4-amino-2-methyl-5-(diphosphooxymethyl)pyrimidine-binding positions include 43 to 47 (QLRDK) and asparagine 74. Aspartate 75 and aspartate 94 together coordinate Mg(2+). Serine 113 serves as a coordination point for 4-amino-2-methyl-5-(diphosphooxymethyl)pyrimidine. 142 to 144 (TAT) lines the 2-[(2R,5Z)-2-carboxy-4-methylthiazol-5(2H)-ylidene]ethyl phosphate pocket. Lysine 145 is a binding site for 4-amino-2-methyl-5-(diphosphooxymethyl)pyrimidine. 2-[(2R,5Z)-2-carboxy-4-methylthiazol-5(2H)-ylidene]ethyl phosphate contacts are provided by residues glycine 173 and 193-194 (VS).

It belongs to the thiamine-phosphate synthase family. The cofactor is Mg(2+).

The enzyme catalyses 2-[(2R,5Z)-2-carboxy-4-methylthiazol-5(2H)-ylidene]ethyl phosphate + 4-amino-2-methyl-5-(diphosphooxymethyl)pyrimidine + 2 H(+) = thiamine phosphate + CO2 + diphosphate. It catalyses the reaction 2-(2-carboxy-4-methylthiazol-5-yl)ethyl phosphate + 4-amino-2-methyl-5-(diphosphooxymethyl)pyrimidine + 2 H(+) = thiamine phosphate + CO2 + diphosphate. The catalysed reaction is 4-methyl-5-(2-phosphooxyethyl)-thiazole + 4-amino-2-methyl-5-(diphosphooxymethyl)pyrimidine + H(+) = thiamine phosphate + diphosphate. Its pathway is cofactor biosynthesis; thiamine diphosphate biosynthesis; thiamine phosphate from 4-amino-2-methyl-5-diphosphomethylpyrimidine and 4-methyl-5-(2-phosphoethyl)-thiazole: step 1/1. Its function is as follows. Condenses 4-methyl-5-(beta-hydroxyethyl)thiazole monophosphate (THZ-P) and 2-methyl-4-amino-5-hydroxymethyl pyrimidine pyrophosphate (HMP-PP) to form thiamine monophosphate (TMP). This chain is Thiamine-phosphate synthase, found in Psychrobacter sp. (strain PRwf-1).